We begin with the raw amino-acid sequence, 384 residues long: Queuine tRNA-ribosyltransferase (384 aa).

D103 (proton acceptor) is an active-site residue. Residues 103-107 (DSGGF), D157, Q200, and G227 contribute to the substrate site. The RNA binding stretch occupies residues 258–264 (GVGTYRE). D277 functions as the Nucleophile in the catalytic mechanism. The segment at 282–286 (TRLAR) is RNA binding; important for wobble base 34 recognition. 4 residues coordinate Zn(2+): C315, C317, C320, and H346.

This sequence belongs to the queuine tRNA-ribosyltransferase family. In terms of assembly, homodimer. Within each dimer, one monomer is responsible for RNA recognition and catalysis, while the other monomer binds to the replacement base PreQ1. The cofactor is Zn(2+).

It carries out the reaction 7-aminomethyl-7-carbaguanine + guanosine(34) in tRNA = 7-aminomethyl-7-carbaguanosine(34) in tRNA + guanine. It functions in the pathway tRNA modification; tRNA-queuosine biosynthesis. Its function is as follows. Catalyzes the base-exchange of a guanine (G) residue with the queuine precursor 7-aminomethyl-7-deazaguanine (PreQ1) at position 34 (anticodon wobble position) in tRNAs with GU(N) anticodons (tRNA-Asp, -Asn, -His and -Tyr). Catalysis occurs through a double-displacement mechanism. The nucleophile active site attacks the C1' of nucleotide 34 to detach the guanine base from the RNA, forming a covalent enzyme-RNA intermediate. The proton acceptor active site deprotonates the incoming PreQ1, allowing a nucleophilic attack on the C1' of the ribose to form the product. After dissociation, two additional enzymatic reactions on the tRNA convert PreQ1 to queuine (Q), resulting in the hypermodified nucleoside queuosine (7-(((4,5-cis-dihydroxy-2-cyclopenten-1-yl)amino)methyl)-7-deazaguanosine). The chain is Queuine tRNA-ribosyltransferase from Synechococcus elongatus (strain ATCC 33912 / PCC 7942 / FACHB-805) (Anacystis nidulans R2).